The sequence spans 158 residues: Small ribosomal subunit protein uS9 (158 aa).

It belongs to the universal ribosomal protein uS9 family.

This Brucella melitensis biotype 2 (strain ATCC 23457) protein is Small ribosomal subunit protein uS9.